A 404-amino-acid chain; its full sequence is Cysteine desulfurase IscS (404 aa).

Residues 75 to 76 (AT), N155, Q183, and 203 to 205 (SAH) each bind pyridoxal 5'-phosphate. K206 bears the N6-(pyridoxal phosphate)lysine mark. Residue T243 coordinates pyridoxal 5'-phosphate. C328 (cysteine persulfide intermediate) is an active-site residue. C328 is a [2Fe-2S] cluster binding site.

This sequence belongs to the class-V pyridoxal-phosphate-dependent aminotransferase family. NifS/IscS subfamily. In terms of assembly, homodimer. Forms a heterotetramer with IscU, interacts with other sulfur acceptors. It depends on pyridoxal 5'-phosphate as a cofactor.

It localises to the cytoplasm. It catalyses the reaction (sulfur carrier)-H + L-cysteine = (sulfur carrier)-SH + L-alanine. Its pathway is cofactor biosynthesis; iron-sulfur cluster biosynthesis. Its function is as follows. Master enzyme that delivers sulfur to a number of partners involved in Fe-S cluster assembly, tRNA modification or cofactor biosynthesis. Catalyzes the removal of elemental sulfur atoms from cysteine to produce alanine. Functions as a sulfur delivery protein for Fe-S cluster synthesis onto IscU, an Fe-S scaffold assembly protein, as well as other S acceptor proteins. The polypeptide is Cysteine desulfurase IscS (Pseudomonas aeruginosa (strain UCBPP-PA14)).